A 671-amino-acid polypeptide reads, in one-letter code: DNA ligase (671 aa).

Residues 32 to 36 (DAEYD), 81 to 82 (SL), and E113 each bind NAD(+). K115 acts as the N6-AMP-lysine intermediate in catalysis. Positions 136, 173, 290, and 314 each coordinate NAD(+). Zn(2+) is bound by residues C408, C411, C426, and C432. Positions 593–671 (EIDSPFAGKT…EAEMIRLLGA (79 aa)) constitute a BRCT domain.

This sequence belongs to the NAD-dependent DNA ligase family. LigA subfamily. Requires Mg(2+) as cofactor. The cofactor is Mn(2+).

It catalyses the reaction NAD(+) + (deoxyribonucleotide)n-3'-hydroxyl + 5'-phospho-(deoxyribonucleotide)m = (deoxyribonucleotide)n+m + AMP + beta-nicotinamide D-nucleotide.. Functionally, DNA ligase that catalyzes the formation of phosphodiester linkages between 5'-phosphoryl and 3'-hydroxyl groups in double-stranded DNA using NAD as a coenzyme and as the energy source for the reaction. It is essential for DNA replication and repair of damaged DNA. This chain is DNA ligase, found in Salmonella dublin (strain CT_02021853).